Reading from the N-terminus, the 597-residue chain is Arginine--tRNA ligase (597 aa).

Residues 138 to 148 carry the 'HIGH' region motif; it reads ANPTGPMHVGH.

This sequence belongs to the class-I aminoacyl-tRNA synthetase family. Monomer.

It is found in the cytoplasm. The catalysed reaction is tRNA(Arg) + L-arginine + ATP = L-arginyl-tRNA(Arg) + AMP + diphosphate. This Rhodopseudomonas palustris (strain HaA2) protein is Arginine--tRNA ligase.